Consider the following 430-residue polypeptide: Adenylosuccinate synthetase (430 aa).

Residues 13–19 (GDEGKGK) and 41–43 (GHT) each bind GTP. Asp-14 (proton acceptor) is an active-site residue. The Mg(2+) site is built by Asp-14 and Gly-41. Residues 14–17 (DEGK), 39–42 (NAGH), Thr-130, Arg-144, Gln-225, Thr-240, and Arg-304 each bind IMP. The Proton donor role is filled by His-42. Residue 300-306 (STTGRAR) participates in substrate binding. GTP-binding positions include Arg-306, 332-334 (KLD), and 414-416 (STG).

It belongs to the adenylosuccinate synthetase family. As to quaternary structure, homodimer. It depends on Mg(2+) as a cofactor.

The protein localises to the cytoplasm. It catalyses the reaction IMP + L-aspartate + GTP = N(6)-(1,2-dicarboxyethyl)-AMP + GDP + phosphate + 2 H(+). It participates in purine metabolism; AMP biosynthesis via de novo pathway; AMP from IMP: step 1/2. Plays an important role in the de novo pathway of purine nucleotide biosynthesis. Catalyzes the first committed step in the biosynthesis of AMP from IMP. The sequence is that of Adenylosuccinate synthetase from Pseudomonas entomophila (strain L48).